Consider the following 475-residue polypeptide: Ribulose bisphosphate carboxylase large chain (475 aa).

Positions 1 to 2 are excised as a propeptide; it reads MS. P3 is subject to N-acetylproline. An N6,N6,N6-trimethyllysine modification is found at K14. Residues N123 and T173 each coordinate substrate. The active-site Proton acceptor is the K175. Position 177 (K177) interacts with substrate. Mg(2+) contacts are provided by K201, D203, and E204. N6-carboxylysine is present on K201. H294 serves as the catalytic Proton acceptor. 3 residues coordinate substrate: R295, H327, and S379.

Belongs to the RuBisCO large chain family. Type I subfamily. As to quaternary structure, heterohexadecamer of 8 large chains and 8 small chains; disulfide-linked. The disulfide link is formed within the large subunit homodimers. It depends on Mg(2+) as a cofactor. Post-translationally, the disulfide bond which can form in the large chain dimeric partners within the hexadecamer appears to be associated with oxidative stress and protein turnover.

It localises to the plastid. It is found in the chloroplast. The enzyme catalyses 2 (2R)-3-phosphoglycerate + 2 H(+) = D-ribulose 1,5-bisphosphate + CO2 + H2O. It catalyses the reaction D-ribulose 1,5-bisphosphate + O2 = 2-phosphoglycolate + (2R)-3-phosphoglycerate + 2 H(+). Its function is as follows. RuBisCO catalyzes two reactions: the carboxylation of D-ribulose 1,5-bisphosphate, the primary event in carbon dioxide fixation, as well as the oxidative fragmentation of the pentose substrate in the photorespiration process. Both reactions occur simultaneously and in competition at the same active site. This Magnolia macrophylla (Bigleaf magnolia) protein is Ribulose bisphosphate carboxylase large chain.